Here is an 82-residue protein sequence, read N- to C-terminus: Small ribosomal subunit protein bS16 (82 aa).

Belongs to the bacterial ribosomal protein bS16 family.

The sequence is that of Small ribosomal subunit protein bS16 from Francisella philomiragia subsp. philomiragia (strain ATCC 25017 / CCUG 19701 / FSC 153 / O#319-036).